The following is a 689-amino-acid chain: MEDTGIQRGIWDGDAKAVQQCLTDIFTSVYTTCDIPENAIFGPCVLSHTSLYDSIAFIALKSTDKRTVPYIFRVDTSAANGSSEGLMWLRLVQSARDKEEQNLEAYIKNGQLFYRSLRRIAKDEELLVWYGKELTELLLLCPSRSHNKMNGSSPYTCLECSQRFQFEFPYVAHLRFRCPKRLHSADISPQDEQGGGVGTKDHGGGGGGGKDQQQQQQEAPLGPGPKFCKAGPLHHYPSPSPESSNPSAAAGGSSAKPSTDFHNLARELENSRGGSSCSPAQSLSSGSGSGGGGGHQEAELSPDGIATGGGKGKRKFPEEAAEGGGGAGLVGGRGRFVERPLPASKEDLVCTPQQYRASGSYFGLEENGRLFAPPSPETGEAKRSAFVEVKKAARAASLQEEGTADGAGVASEDQDAGGGGGSSTPAAASPVGAEKLLAPRPGGPLPSRLEGGSPARGSAFTSVPQLGSAGSTSGGGGTGAGAAGGAGGGQGAASDERKSAFSQPARSFSQLSPLVLGQKLGALEPCHPADGVGPTRLYPAAADPLAVKLQGAADLNGGCGSLPSGGGGLPKQSPFLYATAFWPKSSAAAAAAAAAAAAGPLQLQLPSALTLLPPSFTSLCLPAQNWCAKCNASFRMTSDLVYHMRSHHKKEYAMEPLVKRRREEKLKCPICNESFRERHHLSRHMTSHN.

Residues 16 to 131 form the SET domain; that stretch reads KAVQQCLTDI…KDEELLVWYG (116 aa). Tyrosine 130 is a binding site for S-adenosyl-L-methionine. The C2H2-type 1 zinc-finger motif lies at 155 to 183; that stretch reads YTCLECSQRFQFEFPYVAHLRFRCPKRLH. 2 disordered regions span residues 185-333 and 397-506; these read ADIS…VGGR and SLQE…QPAR. Over residues 193 to 210 the composition is skewed to gly residues; that stretch reads QGGGVGTKDHGGGGGGGK. Low complexity-rich tracts occupy residues 241-258 and 273-286; these read PESSNPSAAAGGSSAKPS and GGSSCSPAQSLSSG. Gly residues predominate over residues 322-333; it reads EGGGGAGLVGGR. The span at 423-433 shows a compositional bias: low complexity; sequence STPAAASPVGA. Over residues 472–491 the composition is skewed to gly residues; the sequence is TSGGGGTGAGAAGGAGGGQG. C2H2-type zinc fingers lie at residues 625-648 and 666-688; these read NWCAKCNASFRMTSDLVYHMRSHH and LKCPICNESFRERHHLSRHMTSH.

Belongs to the class V-like SAM-binding methyltransferase superfamily. As to quaternary structure, interacts with EPM2A and NHLRC1. This interaction sequesters EPM2A and NHLRC1 to the nucleus. Interacts with BHLHE22. As to expression, expressed in brain, heart, skeletal muscle, testes, prostate.

Its subcellular location is the nucleus. Probable histone methyltransferase, preferentially acting on 'Lys-9' of histone H3. Involved in the control of steroidogenesis through transcriptional repression of steroidogenesis marker genes such as CYP17A1 and LHCGR. Forms with BHLHE22 a transcriptional repressor complex controlling genes involved in neural development and neuronal differentiation. In the retina, it is required for rod bipolar and type 2 OFF-cone bipolar cell survival. This Homo sapiens (Human) protein is PR domain zinc finger protein 8 (PRDM8).